A 470-amino-acid chain; its full sequence is Cytochrome P450 monooxygenase sirC (470 aa).

The chain crosses the membrane as a helical span at residues 12 to 34; the sequence is LRGMVVGTIMLLCYRYGLALSIL. Asparagine 399 is a glycosylation site (N-linked (GlcNAc...) asparagine). Residue cysteine 410 participates in heme binding.

Belongs to the cytochrome P450 family. Heme is required as a cofactor.

The protein resides in the membrane. The protein operates within mycotoxin biosynthesis. Its function is as follows. Cytochrome P450 monooxygenase; part of the gene cluster that mediates the biosynthesis of sirodesmin PL, an epipolythiodioxopiperazine (ETP) characterized by a disulfide bridged cyclic dipeptide and that acts as a phytotoxin which is involved in the blackleg didease of canola. SirD catalyzes the O-prenylation of L-tyrosine (L-Tyr) in the presence of dimethylallyl diphosphate (DMAPP) to yield 4-O-dimethylallyl-L-Tyr, and therefore represents probably the first pathway-specific enzyme in the biosynthesis of sirodesmin PL. 4-O-dimethylallyl-L-Tyr, then undergoes condensation with L-Ser in a reaction catalyzed by the non-ribosomal peptide synthase sirP to form the diketopiperazine (DKP) backbone. Further bishydroxylation of the DKP performed by the cytochrome P450 monooxygenase sirC leads to the production of the intermediate phomamide. This step is essential to form the reactive thiol group required for toxicity of sirodesmin PL. The next steps of sirodesmin biosynthesis are not well understood yet, but some predictions could be made from intermediate compounds identification. Phomamide is converted into phomalizarine via oxidation, probably by sirT. Further oxidation, methylation (by sirM or sirN) and reduction steps convert phomalizarine to deacetyl sirodesmin. Finally, acetyltransferase sirH probably acetylates deacetyl sirodesmin to produce sirodesmin PL. This chain is Cytochrome P450 monooxygenase sirC, found in Leptosphaeria maculans (Blackleg fungus).